The following is a 379-amino-acid chain: 1-deoxy-D-xylulose 5-phosphate reductoisomerase (379 aa).

Positions 10, 11, 12, 13, 39, and 121 each coordinate NADPH. Residue Lys122 coordinates 1-deoxy-D-xylulose 5-phosphate. Glu123 is a binding site for NADPH. Asp147 lines the Mn(2+) pocket. Positions 148, 149, 173, and 196 each coordinate 1-deoxy-D-xylulose 5-phosphate. A Mn(2+)-binding site is contributed by Glu149. Gly202 contacts NADPH. 1-deoxy-D-xylulose 5-phosphate contacts are provided by Ser209, Asn214, Lys215, and Glu218. Glu218 contacts Mn(2+).

This sequence belongs to the DXR family. Requires Mg(2+) as cofactor. Mn(2+) is required as a cofactor.

The catalysed reaction is 2-C-methyl-D-erythritol 4-phosphate + NADP(+) = 1-deoxy-D-xylulose 5-phosphate + NADPH + H(+). It participates in isoprenoid biosynthesis; isopentenyl diphosphate biosynthesis via DXP pathway; isopentenyl diphosphate from 1-deoxy-D-xylulose 5-phosphate: step 1/6. Functionally, catalyzes the NADPH-dependent rearrangement and reduction of 1-deoxy-D-xylulose-5-phosphate (DXP) to 2-C-methyl-D-erythritol 4-phosphate (MEP). In Chlamydia felis (strain Fe/C-56) (Chlamydophila felis), this protein is 1-deoxy-D-xylulose 5-phosphate reductoisomerase.